The following is a 436-amino-acid chain: Antilisterial bacteriocin subtilosin biosynthesis protein AlbD (436 aa).

The next 10 membrane-spanning stretches (helical) occupy residues 27-47 (IAAG…QAGI), 55-75 (TYII…SVTS), 113-133 (LFFF…GAQT), 134-154 (LFWL…GVVL), 164-184 (LMFL…ALMP), 187-207 (TIPL…PVFL), 240-260 (AMLL…FQMM), 270-290 (IYIV…LYSI), 315-335 (FYSG…GFIS), and 395-415 (AILA…LVIV).

Its subcellular location is the cell membrane. In terms of biological role, involved in the production of the bacteriocin subtilosin. Required for immunity to subtilosin. In Bacillus subtilis (strain 168), this protein is Antilisterial bacteriocin subtilosin biosynthesis protein AlbD (albD).